The sequence spans 578 residues: CTP synthase 2 (578 aa).

One can recognise a Glutamine amidotransferase type-1 domain in the interval 305–564; the sequence is KIALVGKYTN…VAAASGTLGE (260 aa). Catalysis depends on for GATase activity residues cysteine 404, histidine 537, and glutamate 539.

The protein belongs to the CTP synthase family. As to quaternary structure, homodimer. Oligomerizes to a tetramer in the presence of its substrates UTP and ATP. Requires Mg(2+) as cofactor.

It is found in the cytoplasm. It carries out the reaction UTP + L-glutamine + ATP + H2O = CTP + L-glutamate + ADP + phosphate + 2 H(+). It functions in the pathway pyrimidine metabolism; CTP biosynthesis via de novo pathway; CTP from UDP: step 2/2. With respect to regulation, activated by GTP. Subject to allosteric product inhibition by CTP. Inhibited by p-chloromercuriphenylsulfonic acid, N-ethylmaleimide and cyclopentenylcytosine (CPEC). In terms of biological role, catalyzes the ATP-dependent amination of UTP to CTP with either L-glutamine or ammonia as the source of nitrogen. Plays an important role in the regulation of phospholipid synthesis. The protein is CTP synthase 2 (URA8) of Saccharomyces cerevisiae (strain ATCC 204508 / S288c) (Baker's yeast).